The primary structure comprises 107 residues: MTERNASGRMNTKGRSIKETKKAMNEEVGPFTLFLVTLGADLINALQREGRLGLSHLGMAEHKRFENQVKIRKGREKTERKAVAPVRAREIKNKDSCFPHTHIGCEK.

The span at 1-14 shows a compositional bias: polar residues; that stretch reads MTERNASGRMNTKG. The tract at residues 1 to 20 is disordered; it reads MTERNASGRMNTKGRSIKET.

It is found in the mitochondrion. This is an uncharacterized protein from Arabidopsis thaliana (Mouse-ear cress).